The following is a 274-amino-acid chain: Diaminopimelate epimerase (274 aa).

Residues asparagine 11, glutamine 44, and asparagine 64 each coordinate substrate. The Proton donor role is filled by cysteine 73. Residues 74-75 (GN), asparagine 157, asparagine 190, and 208-209 (ER) each bind substrate. Residue cysteine 217 is the Proton acceptor of the active site. Substrate is bound at residue 218–219 (GS).

This sequence belongs to the diaminopimelate epimerase family. As to quaternary structure, homodimer.

It localises to the cytoplasm. The enzyme catalyses (2S,6S)-2,6-diaminopimelate = meso-2,6-diaminopimelate. Its pathway is amino-acid biosynthesis; L-lysine biosynthesis via DAP pathway; DL-2,6-diaminopimelate from LL-2,6-diaminopimelate: step 1/1. Its function is as follows. Catalyzes the stereoinversion of LL-2,6-diaminopimelate (L,L-DAP) to meso-diaminopimelate (meso-DAP), a precursor of L-lysine and an essential component of the bacterial peptidoglycan. This Glaesserella parasuis serovar 5 (strain SH0165) (Haemophilus parasuis) protein is Diaminopimelate epimerase.